Reading from the N-terminus, the 291-residue chain is ATP synthase gamma chain (291 aa).

It belongs to the ATPase gamma chain family. As to quaternary structure, F-type ATPases have 2 components, CF(1) - the catalytic core - and CF(0) - the membrane proton channel. CF(1) has five subunits: alpha(3), beta(3), gamma(1), delta(1), epsilon(1). CF(0) has three main subunits: a, b and c.

It is found in the cell membrane. Its function is as follows. Produces ATP from ADP in the presence of a proton gradient across the membrane. The gamma chain is believed to be important in regulating ATPase activity and the flow of protons through the CF(0) complex. The chain is ATP synthase gamma chain from Streptococcus pyogenes serotype M3 (strain ATCC BAA-595 / MGAS315).